The chain runs to 504 residues: Sodium-coupled neutral amino acid symporter 2 (504 aa).

Residues 1 to 22 (MKKTEMGRFNISPDEDSSSYSS) form a disordered region. The Cytoplasmic segment spans residues 1–76 (MKKTEMGRFN…HPGTTSFGMS (76 aa)). The interval 1 to 96 (MKKTEMGRFN…SGILGLSYAM (96 aa)) is regulates protein turnover upon amino acid deprivation. A phosphoserine mark is found at S12, S21, S22, and S55. The helical transmembrane segment at 77-96 (VFNLSNAIVGSGILGLSYAM) threads the bilayer. N82 serves as a coordination point for Na(+). Topologically, residues 97-102 (ANTGIA) are extracellular. A helical membrane pass occupies residues 103–123 (LFIILLTFVSIFSLYSVHLLL). Topologically, residues 124–158 (KTANEGGSLLYEQLGHKAYGLAGKLAASGSITMQN) are cytoplasmic. Residues 159–177 (IGAMSSYLFIVKYELPLVI) form a helical membrane-spanning segment. Over 178-188 (KALMNIEDTNG) the chain is Extracellular. A helical membrane pass occupies residues 189 to 209 (LWYLNGDYLVLLVSFVLILPL). Over 210-217 (SLLRNLGY) the chain is Cytoplasmic. Residues 218–238 (LGYTSGLSLLCMIFFLIVVIC) traverse the membrane as a helical segment. Topologically, residues 239 to 290 (KKFQIPCPVEVALMANETVNGTFTQVALAALASNSTAADTCRPRYFIFNSQT) are extracellular. An intrachain disulfide couples C245 to C279. 3 N-linked (GlcNAc...) asparagine glycosylation sites follow: N254, N258, and N272. A helical transmembrane segment spans residues 291 to 311 (VYAVPILTFSFVCHPAVLPIY). Residues 312–327 (EELKSRSRRRMMNVSK) are Cytoplasmic-facing. The chain crosses the membrane as a helical span at residues 328–348 (ISFFAMFLMYLLAALFGYLTF). The Extracellular portion of the chain corresponds to 349 to 369 (YEHVESELLHTYSAIVGTDIL). Residues 370-390 (LLVVRLAVLVAVTLTVPVVIF) form a helical membrane-spanning segment. Na(+) is bound at residue T384. At 391-411 (PIRSSVTHLLCPTKEFSWFRH) the chain is on the cytoplasmic side. A helical transmembrane segment spans residues 412-432 (SVITVTILAFTNLLVIFVPTI). Over 433–434 (RD) the chain is Extracellular. Residues 435 to 455 (IFGFIGASAAAMLIFILPSAF) form a helical membrane-spanning segment. At 456-470 (YIKLVKKEPMRSVQK) the chain is on the cytoplasmic side. The helical transmembrane segment at 471–493 (IGALCFLLSGVVVMIGSMGLIVL) threads the bilayer. The Extracellular portion of the chain corresponds to 494-504 (DWVHDASAGGH).

It belongs to the amino acid/polyamine transporter 2 family. Polyubiquitination by NEDD4L regulates the degradation and the activity of SLC38A2. As to expression, widely expressed. Expressed in skeletal muscle and adipose tissue (at protein level). Expressed by glutamatergic and GABAergic neurons together with astrocytes and other non-neuronal cells in the cerebral cortex (at protein level). Widely expressed in the central nervous systeme where, it is enriched in the spinal cord and the brainstem nuclei, especially those of the auditory system.

It localises to the cell membrane. It carries out the reaction L-alanine(in) + Na(+)(in) = L-alanine(out) + Na(+)(out). The catalysed reaction is glycine(in) + Na(+)(in) = glycine(out) + Na(+)(out). It catalyses the reaction L-serine(in) + Na(+)(in) = L-serine(out) + Na(+)(out). The enzyme catalyses L-proline(in) + Na(+)(in) = L-proline(out) + Na(+)(out). It carries out the reaction L-methionine(in) + Na(+)(in) = L-methionine(out) + Na(+)(out). The catalysed reaction is L-histidine(in) + Na(+)(in) = L-histidine(out) + Na(+)(out). It catalyses the reaction L-asparagine(in) + Na(+)(in) = L-asparagine(out) + Na(+)(out). The enzyme catalyses L-glutamine(in) + Na(+)(in) = L-glutamine(out) + Na(+)(out). It carries out the reaction L-threonine(in) + Na(+)(in) = L-threonine(out) + Na(+)(out). The catalysed reaction is L-leucine(in) + Na(+)(in) = L-leucine(out) + Na(+)(out). It catalyses the reaction L-phenylalanine(in) + Na(+)(in) = L-phenylalanine(out) + Na(+)(out). Its activity is regulated as follows. Inhibited by N-methyl-D-glucamine. Inhibited by choline. Allosteric regulation of sodium ions binding by pH. Functionally, symporter that cotransports neutral amino acids and sodium ions from the extracellular to the intracellular side of the cell membrane. The transport is pH-sensitive, Li(+)-intolerant, electrogenic, driven by the Na(+) electrochemical gradient and cotransports of neutral amino acids and sodium ions with a stoichiometry of 1:1. May function in the transport of amino acids at the blood-brain barrier. May function in the transport of amino acids in the supply of maternal nutrients to the fetus through the placenta. Maintains a key metabolic glutamine/glutamate balance underpinning retrograde signaling by dendritic release of the neurotransmitter glutamate. Transports L-proline in differentiating osteoblasts for the efficient synthesis of proline-enriched proteins and provides proline essential for osteoblast differentiation and bone formation during bone development. The protein is Sodium-coupled neutral amino acid symporter 2 of Rattus norvegicus (Rat).